Reading from the N-terminus, the 150-residue chain is FAD synthase (150 aa).

ATP contacts are provided by residues 16–17, 21–24, and Asp-102; these read VF and HVGH.

This sequence belongs to the archaeal FAD synthase family. As to quaternary structure, homodimer. It depends on a divalent metal cation as a cofactor.

The catalysed reaction is FMN + ATP + H(+) = FAD + diphosphate. It participates in cofactor biosynthesis; FAD biosynthesis; FAD from FMN: step 1/1. Catalyzes the transfer of the AMP portion of ATP to flavin mononucleotide (FMN) to produce flavin adenine dinucleotide (FAD) coenzyme. The polypeptide is FAD synthase (Thermococcus onnurineus (strain NA1)).